Here is a 257-residue protein sequence, read N- to C-terminus: Probable dihydroorotate dehydrogenase B (NAD(+)), electron transfer subunit (257 aa).

The FAD-binding FR-type domain maps to 2 to 89 (EKPVICRIKE…RGPYGTYFEP (88 aa)). [2Fe-2S] cluster contacts are provided by Cys208, Cys213, Cys216, and Cys226.

The protein belongs to the PyrK family. As to quaternary structure, heterotetramer of 2 PyrK and 2 PyrD type B subunits. The cofactor is [2Fe-2S] cluster. Requires FAD as cofactor.

It functions in the pathway pyrimidine metabolism; UMP biosynthesis via de novo pathway; orotate from (S)-dihydroorotate (NAD(+) route): step 1/1. Its function is as follows. Responsible for channeling the electrons from the oxidation of dihydroorotate from the FMN redox center in the PyrD type B subunit to the ultimate electron acceptor NAD(+). This is Probable dihydroorotate dehydrogenase B (NAD(+)), electron transfer subunit from Methanocaldococcus jannaschii (strain ATCC 43067 / DSM 2661 / JAL-1 / JCM 10045 / NBRC 100440) (Methanococcus jannaschii).